The chain runs to 344 residues: Arginine N-succinyltransferase (344 aa).

L125 lines the succinyl-CoA pocket. H229 functions as the Proton donor in the catalytic mechanism.

Belongs to the arginine N-succinyltransferase family.

The catalysed reaction is succinyl-CoA + L-arginine = N(2)-succinyl-L-arginine + CoA + H(+). It functions in the pathway amino-acid degradation; L-arginine degradation via AST pathway; L-glutamate and succinate from L-arginine: step 1/5. Catalyzes the transfer of succinyl-CoA to arginine to produce N(2)-succinylarginine. This is Arginine N-succinyltransferase from Escherichia coli O6:H1 (strain CFT073 / ATCC 700928 / UPEC).